The chain runs to 489 residues: Hyaluronoglucuronidase (489 aa).

The active-site Proton donor is Glu176. Catalysis depends on Glu290, which acts as the Nucleophile.

The protein belongs to the glycosyl hydrolase 79 family.

The catalysed reaction is Random hydrolysis of (1-&gt;3)-linkages between beta-D-glucuronate and N-acetyl-D-glucosamine residues in hyaluronate.. Its activity is regulated as follows. Hyaluronidase activity is inhibited by Mn(2+), Cu(2+) and Fe(3+). Functionally, hyaluronidase that mediates hydrolysis of (1-&gt;3)-linkages between beta-D-glucuronate and N-acetyl-D-glucosamine residues in hyaluronate. Very specific to hyaluronate: not able to hydrolyze chitin, heparin or chondroitin sulfate. This Hirudo nipponia (Korean blood-sucking leech) protein is Hyaluronoglucuronidase.